An 887-amino-acid chain; its full sequence is Probable LRR receptor-like serine/threonine-protein kinase At5g59680 (887 aa).

An N-terminal signal peptide occupies residues Met-1–Ala-23. Residues Ser-25–Thr-510 are Extracellular-facing. 12 N-linked (GlcNAc...) asparagine glycosylation sites follow: Asn-143, Asn-230, Asn-256, Asn-289, Asn-338, Asn-363, Asn-400, Asn-416, Asn-432, Asn-445, Asn-464, and Asn-471. LRR repeat units lie at residues Arg-411–Thr-434, Thr-435–Met-457, and Ser-459–Lys-481. A helical membrane pass occupies residues Ile-511 to Leu-531. The Cytoplasmic segment spans residues Arg-532–Arg-887. A Phosphothreonine modification is found at Thr-571. The Protein kinase domain occupies Asn-580–Leu-853. ATP contacts are provided by residues Val-586 to Val-594 and Lys-608. Tyr-653 is modified (phosphotyrosine). Asp-705 serves as the catalytic Proton acceptor. The residue at position 739 (Ser-739) is a Phosphoserine. Phosphothreonine occurs at positions 740 and 745. At Tyr-753 the chain carries Phosphotyrosine.

This sequence belongs to the protein kinase superfamily. Ser/Thr protein kinase family.

It is found in the membrane. It carries out the reaction L-seryl-[protein] + ATP = O-phospho-L-seryl-[protein] + ADP + H(+). It catalyses the reaction L-threonyl-[protein] + ATP = O-phospho-L-threonyl-[protein] + ADP + H(+). The protein is Probable LRR receptor-like serine/threonine-protein kinase At5g59680 of Arabidopsis thaliana (Mouse-ear cress).